Consider the following 439-residue polypeptide: D-inositol 3-phosphate glycosyltransferase (439 aa).

1D-myo-inositol 3-phosphate is bound at residue His-21. Residues 27 to 28 and Gly-35 each bind UDP-N-acetyl-alpha-D-glucosamine; that span reads QP. Residues 32 to 37, Lys-90, Tyr-123, Thr-147, and Arg-167 each bind 1D-myo-inositol 3-phosphate; that span reads DAGGMN. Positions 241, 246, and 299 each coordinate UDP-N-acetyl-alpha-D-glucosamine. Mg(2+) contacts are provided by Tyr-308, Arg-309, and Ala-311. The UDP-N-acetyl-alpha-D-glucosamine site is built by Glu-321 and Glu-329. Thr-335 contributes to the Mg(2+) binding site.

It belongs to the glycosyltransferase group 1 family. MshA subfamily. In terms of assembly, homodimer.

The catalysed reaction is 1D-myo-inositol 3-phosphate + UDP-N-acetyl-alpha-D-glucosamine = 1D-myo-inositol 2-acetamido-2-deoxy-alpha-D-glucopyranoside 3-phosphate + UDP + H(+). In terms of biological role, catalyzes the transfer of a N-acetyl-glucosamine moiety to 1D-myo-inositol 3-phosphate to produce 1D-myo-inositol 2-acetamido-2-deoxy-glucopyranoside 3-phosphate in the mycothiol biosynthesis pathway. The polypeptide is D-inositol 3-phosphate glycosyltransferase (Mycobacterium sp. (strain JLS)).